The chain runs to 157 residues: Ribonuclease 8 (157 aa).

The N-terminal stretch at 1-30 is a signal peptide; that stretch reads MAPARAGCCPLLLLLLLLLGLWVAEVLVSA. His-45 (proton acceptor) is an active-site residue. Cystine bridges form between Cys-53–Cys-96, Cys-67–Cys-121, Cys-85–Cys-136, and Cys-92–Cys-99. Substrate-binding positions include 68–72 and Lys-93; that span reads KDLNT. His-152 (proton donor) is an active-site residue.

The protein belongs to the pancreatic ribonuclease family.

Its subcellular location is the secreted. Has a low ribonuclease activity. The polypeptide is Ribonuclease 8 (RNASE8) (Pan troglodytes (Chimpanzee)).